Reading from the N-terminus, the 205-residue chain is Putative C-type lectin protein FPV001/FPV260 (205 aa).

The C-type lectin domain maps to 84–187 (CPRDWISHNG…CSVRRYLVCK (104 aa)).

The chain is Putative C-type lectin protein FPV001/FPV260 from Fowlpox virus (strain NVSL) (FPV).